A 228-amino-acid chain; its full sequence is MKVTYHGHSVIQVETKTHNIIFDPFLTGNSLTNLKPEEVKADVILLTHGHNDHVGDTEQIAKQNDALVIAPNELAVYLGFKGLKVHPMHIGGARQFDFGKVKLTQAFHGSAVTDEENKTITYTGMPAGILLTIDGKTIFHAGDTALFSDMKLIGELNHIDLAFLPIGDNFTMGPEDAKLAAEWLRAKQVVPVHYNTFPVIEQDPDAFAESLPGGVGKVMAAGETIELA.

The protein belongs to the UPF0173 family.

The chain is UPF0173 metal-dependent hydrolase RBAM_026340 from Bacillus velezensis (strain DSM 23117 / BGSC 10A6 / LMG 26770 / FZB42) (Bacillus amyloliquefaciens subsp. plantarum).